Consider the following 835-residue polypeptide: Disease resistance protein RPP13 (835 aa).

Residues 25–41 (MAVKEDLEELKTELTCI) are a coiled coil. One can recognise an NB-ARC domain in the interval 144 to 453 (SSLRVRQLRR…AEGFIQGDEE (310 aa)). 192–199 (GMGGLGKT) contacts ATP.

This sequence belongs to the disease resistance NB-LRR family. RPP13 subfamily.

In terms of biological role, disease resistance protein. Resistance proteins guard the plant against pathogens that contain an appropriate avirulence protein via an indirect interaction with this avirulence protein. That triggers a defense system including the hypersensitive response, which restricts the pathogen growth. In contrast to other resistance proteins, it works independently of ESD1 and NSD1 proteins and does not require the accumulation of salicylic acid, suggesting the existence of an independent signaling pathway. The specificity to avirulence proteins differs in the different cultivars. In Arabidopsis thaliana (Mouse-ear cress), this protein is Disease resistance protein RPP13 (RPP13).